A 238-amino-acid polypeptide reads, in one-letter code: MLEVILNTPAQLSLPLYLPDDETFASFYPGENASLLAAVNNALYQEHGSYIYFWSREGGGRSHLLHAACAELSRQERAVGYVPLDKRAYFVPDVLEGMEQLALVCIDNIESIAGDEAWEMAVFNLYNRIQETGRALLLITGDRPPRQLNIRLPDLASRLDWGQIYKLQPLSDDEKGEALQLRARLRGFELPEDVSRFLLKRLDREMRTLFMTLDQLDHASITAQRKLTIPFVKEILGL.

It belongs to the DnaA family. HdA subfamily. The active form seems to be an ADP-bound monomer. Forms the RIDA complex (regulatory inactivation of DnaA) of ATP-DnaA, ADP-Hda and the DNA-loaded beta sliding clamp (dnaN).

Mediates the interaction of DNA replication initiator protein DnaA with DNA polymerase subunit beta sliding clamp (dnaN). Stimulates hydrolysis of ATP-DnaA to ADP-DnaA, rendering DnaA inactive for reinitiation, a process called regulatory inhibition of DnaA or RIDA. The protein is DnaA regulatory inactivator Hda of Pectobacterium atrosepticum (strain SCRI 1043 / ATCC BAA-672) (Erwinia carotovora subsp. atroseptica).